The primary structure comprises 45 residues: Large ribosomal subunit protein bL34 (45 aa).

The protein belongs to the bacterial ribosomal protein bL34 family.

The chain is Large ribosomal subunit protein bL34 from Salinispora tropica (strain ATCC BAA-916 / DSM 44818 / JCM 13857 / NBRC 105044 / CNB-440).